Reading from the N-terminus, the 1101-residue chain is Translation initiation factor IF-2 (1101 aa).

Disordered regions lie at residues 81–437 and 452–509; these read QEIL…EDDF and SIST…QRAE. A compositionally biased stretch (polar residues) spans 93 to 108; the sequence is PFSSTDAPVGSGQSSP. Residues 110-124 show a composition bias toward pro residues; it reads IEPPRPPMKPQPPSP. 2 stretches are compositionally biased toward polar residues: residues 128–149 and 157–184; these read EVTSPITDEPVSTQEDTNGSSS and SPMSPFDQQQPEQNTTDHNQEQQNQLKY. Low complexity predominate over residues 185-196; it reads NQEQSNQLEQES. Positions 197-206 are enriched in polar residues; that stretch reads AISSELSEVN. Basic and acidic residues-rich tracts occupy residues 228 to 237, 248 to 288, and 295 to 340; these read SKEKEAKSNE, KENK…DKKS, and VKRE…ELKR. Acidic residues predominate over residues 361–378; sequence EPEDVEDTAEDLLEEDPL. Basic residues-rich tracts occupy residues 385 to 397 and 414 to 428; these read PKLKRPTPPKVGK and KAGKAAKAGKNKRRQ. Over residues 484 to 506 the composition is skewed to basic and acidic residues; the sequence is EPGRGKSAERERSERKDRKEQPQ. Positions 592–765 constitute a tr-type G domain; the sequence is RRPPVVTIMG…LLVAEVGELS (174 aa). The G1 stretch occupies residues 601–608; sequence GHVDHGKT. 601-608 contributes to the GTP binding site; it reads GHVDHGKT. Positions 626–630 are G2; the sequence is GITQH. Positions 651–654 are G3; the sequence is DTPG. GTP is bound by residues 651–655 and 705–708; these read DTPGH and NKID. The interval 705 to 708 is G4; that stretch reads NKID. Positions 741–743 are G5; the sequence is SAL.

It belongs to the TRAFAC class translation factor GTPase superfamily. Classic translation factor GTPase family. IF-2 subfamily.

The protein localises to the cytoplasm. One of the essential components for the initiation of protein synthesis. Protects formylmethionyl-tRNA from spontaneous hydrolysis and promotes its binding to the 30S ribosomal subunits. Also involved in the hydrolysis of GTP during the formation of the 70S ribosomal complex. The protein is Translation initiation factor IF-2 of Gloeothece citriformis (strain PCC 7424) (Cyanothece sp. (strain PCC 7424)).